A 675-amino-acid chain; its full sequence is UvrABC system protein B (675 aa).

Residues 30-417 (SGIEQGNRNQ…SDQIVEQVVR (388 aa)) form the Helicase ATP-binding domain. 43–50 (GVTGSGKT) is an ATP binding site. The Beta-hairpin motif lies at 96-119 (YYDYYQPEAYVPSSDTFIEKDAAI). A Helicase C-terminal domain is found at 434 to 601 (QVDDVLSEIN…AVRQKVKEID (168 aa)). In terms of domain architecture, UVR spans 637–672 (AKHMSKLEKEMLKASKELQFEQAARLRDEILRLKAQ).

The protein belongs to the UvrB family. As to quaternary structure, forms a heterotetramer with UvrA during the search for lesions. Interacts with UvrC in an incision complex.

It is found in the cytoplasm. Its function is as follows. The UvrABC repair system catalyzes the recognition and processing of DNA lesions. A damage recognition complex composed of 2 UvrA and 2 UvrB subunits scans DNA for abnormalities. Upon binding of the UvrA(2)B(2) complex to a putative damaged site, the DNA wraps around one UvrB monomer. DNA wrap is dependent on ATP binding by UvrB and probably causes local melting of the DNA helix, facilitating insertion of UvrB beta-hairpin between the DNA strands. Then UvrB probes one DNA strand for the presence of a lesion. If a lesion is found the UvrA subunits dissociate and the UvrB-DNA preincision complex is formed. This complex is subsequently bound by UvrC and the second UvrB is released. If no lesion is found, the DNA wraps around the other UvrB subunit that will check the other stand for damage. This is UvrABC system protein B from Acinetobacter baylyi (strain ATCC 33305 / BD413 / ADP1).